Here is a 121-residue protein sequence, read N- to C-terminus: Large ribosomal subunit protein uL14c (121 aa).

As to quaternary structure, component of the chloroplast large ribosomal subunit (LSU). Mature 70S chloroplast ribosomes of higher plants consist of a small (30S) and a large (50S) subunit. The 30S small subunit contains 1 molecule of ribosomal RNA (16S rRNA) and 24 different proteins. The 50S large subunit contains 3 rRNA molecules (23S, 5S and 4.5S rRNA) and 33 different proteins.

It is found in the plastid. Its subcellular location is the chloroplast. In terms of biological role, component of the chloroplast ribosome (chloro-ribosome), a dedicated translation machinery responsible for the synthesis of chloroplast genome-encoded proteins, including proteins of the transcription and translation machinery and components of the photosynthetic apparatus. The polypeptide is Large ribosomal subunit protein uL14c (Spinacia oleracea (Spinach)).